The chain runs to 347 residues: Very-long-chain 3-oxoacyl-CoA reductase (347 aa).

The helical transmembrane segment at 20–40 (LLWVVFGLGVLKCTTLSLRFL) threads the bilayer. NADP(+)-binding residues include Val66, Asp120, Asn147, Tyr223, Lys227, Val256, and Ser258. The Proton donor role is filled by Tyr223. The active-site Lowers pKa of active site Tyr is the Lys227.

This sequence belongs to the short-chain dehydrogenases/reductases (SDR) family. As to quaternary structure, interacts with the fatty acid elongation system components ELO3 and TSC13.

The protein resides in the endoplasmic reticulum membrane. The catalysed reaction is a very-long-chain (3R)-3-hydroxyacyl-CoA + NADP(+) = a very-long-chain 3-oxoacyl-CoA + NADPH + H(+). It functions in the pathway lipid metabolism; fatty acid biosynthesis. Its function is as follows. Component of the microsomal membrane bound fatty acid elongation system, which produces the 26-carbon very long-chain fatty acids (VLCFA) from palmitate. Catalyzes the reduction of the 3-ketoacyl-CoA intermediate that is formed in each cycle of fatty acid elongation. VLCFAs serve as precursors for ceramide and sphingolipids. The sequence is that of Very-long-chain 3-oxoacyl-CoA reductase from Saccharomyces cerevisiae (strain RM11-1a) (Baker's yeast).